The sequence spans 596 residues: Clathrin heavy chain linker domain-containing protein 1 (596 aa).

The stretch at 129-241 forms a coiled coil; sequence QLEAKMRIIE…RDIAENLKKD (113 aa).

This is Clathrin heavy chain linker domain-containing protein 1 (Clhc1) from Mus musculus (Mouse).